The following is a 181-amino-acid chain: Protein Syd (181 aa).

The protein belongs to the Syd family.

It is found in the cell inner membrane. Functionally, interacts with the SecY protein in vivo. May bind preferentially to an uncomplexed state of SecY, thus functioning either as a chelating agent for excess SecY in the cell or as a regulatory factor that negatively controls the translocase function. In Cronobacter sakazakii (strain ATCC BAA-894) (Enterobacter sakazakii), this protein is Protein Syd.